Consider the following 179-residue polypeptide: uncharacterized protein (179 aa).

This is an uncharacterized protein from Encephalitozoon cuniculi (strain GB-M1) (Microsporidian parasite).